Consider the following 598-residue polypeptide: Elongation factor 4 (598 aa).

One can recognise a tr-type G domain in the interval 4–185; the sequence is KNIRNFSIIA…TIIAKIPPPK (182 aa). GTP contacts are provided by residues 16–21 and 132–135; these read DHGKST and NKID.

Belongs to the TRAFAC class translation factor GTPase superfamily. Classic translation factor GTPase family. LepA subfamily.

It is found in the cell membrane. The catalysed reaction is GTP + H2O = GDP + phosphate + H(+). Functionally, required for accurate and efficient protein synthesis under certain stress conditions. May act as a fidelity factor of the translation reaction, by catalyzing a one-codon backward translocation of tRNAs on improperly translocated ribosomes. Back-translocation proceeds from a post-translocation (POST) complex to a pre-translocation (PRE) complex, thus giving elongation factor G a second chance to translocate the tRNAs correctly. Binds to ribosomes in a GTP-dependent manner. The sequence is that of Elongation factor 4 from Mycoplasma genitalium (strain ATCC 33530 / DSM 19775 / NCTC 10195 / G37) (Mycoplasmoides genitalium).